Consider the following 367-residue polypeptide: MISFETRTRMEELEKKYKDILSVVNENEVDREIEEIEKKLTDPSVWDDQKKAREYTQKLKRLKNISEDLKRVRSLFEDLEVAIELSDEDQEMAQHVEEIVQELEGAVKKLELEIILNGKYDPNNAYLSVHPGAGGTESQDWAQMLLRMYMRWAERKGFDVEIVEFQPGEEAGIKDATILIKGEYAYGYLKHESGVHRLVRISPFDAARRRHTSFASVNVIPEIDDDVDIEIRPEDLKIETFRASGHGGQYVNKTESAVRITHLPTGIVVSCQNERSQHQNKQTALKILKAKLYQLEMEKKQREIQEIQGELKDISWGNQIRSYVFHPYTMVKDHRTGVETANVDAVMDGDIDMFIEAELVYFARRSG.

Residue glutamine 249 is modified to N5-methylglutamine.

This sequence belongs to the prokaryotic/mitochondrial release factor family. Post-translationally, methylated by PrmC. Methylation increases the termination efficiency of RF2.

It localises to the cytoplasm. In terms of biological role, peptide chain release factor 2 directs the termination of translation in response to the peptide chain termination codons UGA and UAA. The polypeptide is Peptide chain release factor 2 (Thermotoga petrophila (strain ATCC BAA-488 / DSM 13995 / JCM 10881 / RKU-1)).